The chain runs to 182 residues: Crossover junction endodeoxyribonuclease RuvC (182 aa).

Active-site residues include D7, E69, and D141. Mg(2+) is bound by residues D7, E69, and D141.

The protein belongs to the RuvC family. In terms of assembly, homodimer which binds Holliday junction (HJ) DNA. The HJ becomes 2-fold symmetrical on binding to RuvC with unstacked arms; it has a different conformation from HJ DNA in complex with RuvA. In the full resolvosome a probable DNA-RuvA(4)-RuvB(12)-RuvC(2) complex forms which resolves the HJ. Mg(2+) is required as a cofactor.

The protein resides in the cytoplasm. The enzyme catalyses Endonucleolytic cleavage at a junction such as a reciprocal single-stranded crossover between two homologous DNA duplexes (Holliday junction).. Functionally, the RuvA-RuvB-RuvC complex processes Holliday junction (HJ) DNA during genetic recombination and DNA repair. Endonuclease that resolves HJ intermediates. Cleaves cruciform DNA by making single-stranded nicks across the HJ at symmetrical positions within the homologous arms, yielding a 5'-phosphate and a 3'-hydroxyl group; requires a central core of homology in the junction. The consensus cleavage sequence is 5'-(A/T)TT(C/G)-3'. Cleavage occurs on the 3'-side of the TT dinucleotide at the point of strand exchange. HJ branch migration catalyzed by RuvA-RuvB allows RuvC to scan DNA until it finds its consensus sequence, where it cleaves and resolves the cruciform DNA. This Paracidovorax citrulli (strain AAC00-1) (Acidovorax citrulli) protein is Crossover junction endodeoxyribonuclease RuvC.